The sequence spans 547 residues: Glucose-6-phosphate isomerase 2 (547 aa).

The active-site Proton donor is the glutamate 351. Catalysis depends on residues histidine 382 and lysine 508.

This sequence belongs to the GPI family.

The protein localises to the cytoplasm. It carries out the reaction alpha-D-glucose 6-phosphate = beta-D-fructose 6-phosphate. It functions in the pathway carbohydrate biosynthesis; gluconeogenesis. Its pathway is carbohydrate degradation; glycolysis; D-glyceraldehyde 3-phosphate and glycerone phosphate from D-glucose: step 2/4. In terms of biological role, catalyzes the reversible isomerization of glucose-6-phosphate to fructose-6-phosphate. This is Glucose-6-phosphate isomerase 2 from Neisseria gonorrhoeae (strain ATCC 700825 / FA 1090).